The following is a 1025-amino-acid chain: Protein mono-ADP-ribosyltransferase PARP10 (1025 aa).

Residue Thr101 is modified to Phosphothreonine. Glu106 is subject to ADP-ribosyl glutamic acid. Lys140 carries the N6-(ADP-ribosyl)lysine modification. The tract at residues 318-346 is disordered; it reads GIMTTGSGQEPGQSGTSLRTGPMGSLGQA. Residues 321-336 show a composition bias toward polar residues; the sequence is TTGSGQEPGQSGTSLR. Residues Ser378, Ser423, and Ser431 each carry the phosphoserine modification. 2 disordered regions span residues 569 to 589 and 617 to 644; these read VLPG…DQED and LEEE…APST. Positions 617-639 are enriched in acidic residues; that stretch reads LEEEGPQEQPEEEVTPGHEEEEP. Short sequence motifs (ubiquitin-interacting) lie at residues 650–667 and 673–690; these read LEEE…LEPQ and QEEA…LLEQ. Ser663 bears the Phosphoserine mark. Residues 700 to 907 form a myc binding region; sequence DGGTDGKAQL…CAHGFNRSFC (208 aa). Positions 806–1025 constitute a PARP catalytic domain; sequence PTLAGQTLKG…SGLPGRSPDT (220 aa). A PIP-box motif is present at residues 831–838; the sequence is QEVVRAFY. An ADP-ribosyl glutamic acid modification is found at Glu882. N6-(ADP-ribosyl)lysine is present on Lys916. Lys916 is subject to N6-acetyllysine. The tract at residues 1006–1025 is disordered; sequence HVPRASPDDPSGLPGRSPDT. Position 1011 is a phosphoserine (Ser1011).

This sequence belongs to the ARTD/PARP family. Interacts with MYC. Interacts with PARP14. Interacts (via-PIP box and ubiquitin-interacting motifs) with PCNA. In terms of processing, stimulated through its phosphorylation by CDK2. Acquires CDK-dependent phosphorylation through late-G1 to S phase, and from prometaphase to cytokinesis in the nucleolar organizing regions. Phosphorylation is suppressed in growth-arrested cells. Post-translationally, auto-mono-ADP-ribosylated on glutamate and lysine residues. Highly expressed in spleen and thymus. Intermediate levels in liver, kidney, pancreas, prostate, testis, ovary, intestine, and leukocytes. Low expression in heart, brain, placenta, lung, skeletal muscle, and colon.

Its subcellular location is the nucleus. The protein localises to the nucleolus. The protein resides in the cytoplasm. The enzyme catalyses L-lysyl-[protein] + NAD(+) = N(6)-(ADP-D-ribosyl)-L-lysyl-[protein] + nicotinamide + H(+). It carries out the reaction L-aspartyl-[protein] + NAD(+) = 4-O-(ADP-D-ribosyl)-L-aspartyl-[protein] + nicotinamide. The catalysed reaction is L-glutamyl-[protein] + NAD(+) = 5-O-(ADP-D-ribosyl)-L-glutamyl-[protein] + nicotinamide. Functionally, ADP-ribosyltransferase that mediates mono-ADP-ribosylation of glutamate and aspartate residues on target proteins. In contrast to PARP1 and PARP2, it is not able to mediate poly-ADP-ribosylation. Catalyzes mono-ADP-ribosylation of GSK3B, leading to negatively regulate GSK3B kinase activity. Involved in translesion DNA synthesis in response to DNA damage via its interaction with PCNA. This chain is Protein mono-ADP-ribosyltransferase PARP10, found in Homo sapiens (Human).